The primary structure comprises 442 residues: Endothelin receptor type B (442 aa).

Residues 1-26 (MQPPPSLCGRALVALVLACGLSRIWG) form the signal peptide. Topologically, residues 27 to 101 (EERGFPPDRA…GSIEIKETFK (75 aa)) are extracellular. N-linked (GlcNAc...) asparagine glycosylation is present at Asn59. The interval 69 to 88 (AEVPKGDRTAGSPPRTISPP) is disordered. Residues 102 to 126 (YINTVVSCLVFVLGIIGNSTLLRII) traverse the membrane as a helical segment. Over 127–137 (YKNKCMRNGPN) the chain is Cytoplasmic. The chain crosses the membrane as a helical span at residues 138–163 (ILIASLALGDLLHIIIDIPITVYKLL). Residues 164 to 175 (AEDWPFGVEMCK) lie on the Extracellular side of the membrane. The cysteines at positions 174 and 255 are disulfide-linked. Residues 176-197 (LVPFIQKASVGITVLSLCALSI) form a helical membrane-spanning segment. Residues 198 to 218 (DRYRAVASWSRIKGIGVPKWT) are Cytoplasmic-facing. Residues 219–243 (AVEIVLIWVVSVVLAVPEAVGFDMI) form a helical membrane-spanning segment. The Extracellular segment spans residues 244–271 (TIDYKGRYLRICLLHPTQKTAFMQFYKT). The helical transmembrane segment at 272-296 (AKDWWLFSFYFCLPLAITAFFYTLM) threads the bilayer. Topologically, residues 297 to 324 (TCEMLRKKSGMQIALNDHLKQRREVAKT) are cytoplasmic. Residue Ser305 is modified to Phosphoserine. The chain crosses the membrane as a helical span at residues 325 to 350 (VFCLVLVFALCWLPLHLSRILKLTIY). Topologically, residues 351 to 362 (DQNDPNRCELLS) are extracellular. A helical transmembrane segment spans residues 363–389 (FLLVLDYIGINMASLNSCINPIALYLV). At 390–442 (SKRFKNCFKSCLCCWCQSFEEKQSLEEKQSCLKFKANDHGYDNFRSSNKYSSS) the chain is on the cytoplasmic side. 3 S-palmitoyl cysteine lipidation sites follow: Cys402, Cys403, and Cys405. A Phosphoserine modification is found at Ser419. Position 439 is a phosphotyrosine (Tyr439). 3 positions are modified to phosphoserine: Ser440, Ser441, and Ser442.

The protein belongs to the G-protein coupled receptor 1 family. Endothelin receptor subfamily. EDNRB sub-subfamily.

It is found in the cell membrane. Functionally, non-specific receptor for endothelin 1, 2, and 3. Mediates its action by association with G proteins that activate a phosphatidylinositol-calcium second messenger system. The protein is Endothelin receptor type B (EDNRB) of Canis lupus familiaris (Dog).